The chain runs to 198 residues: Transcription factor FapR (198 aa).

A MaoC-like domain is found at 102–167 (TRIARGHHLF…HGRTIVEVNS (66 aa)).

It belongs to the FapR family.

Its function is as follows. Transcriptional factor involved in regulation of membrane lipid biosynthesis by repressing genes involved in fatty acid and phospholipid metabolism. The polypeptide is Transcription factor FapR (Geobacillus kaustophilus (strain HTA426)).